The chain runs to 196 residues: Large ribosomal subunit protein eL15 (196 aa).

Positions 156–196 are disordered; sequence HRGRAERGKTSAGRKGRGMRTRGRGTEKTRPSIRSHANQGK. Over residues 167–178 the composition is skewed to basic residues; that stretch reads AGRKGRGMRTRG.

It belongs to the eukaryotic ribosomal protein eL15 family.

This is Large ribosomal subunit protein eL15 from Methanoregula boonei (strain DSM 21154 / JCM 14090 / 6A8).